The sequence spans 378 residues: Beta-1,3-galactosyltransferase 4 (378 aa).

Residues 1-8 (MQLRLFRR) are Cytoplasmic-facing. A helical; Signal-anchor for type II membrane protein membrane pass occupies residues 9-19 (LLLAALLLVIV). The Lumenal portion of the chain corresponds to 20–378 (WTLFGPSGLG…RCRAIAWLQS (359 aa)). N149 carries an N-linked (GlcNAc...) asparagine glycan.

It belongs to the glycosyltransferase 31 family. As to expression, highly expressed in heart, skeletal muscle and pancreas and, to a lesser extent, in brain, placenta, kidney, liver and lung.

Its subcellular location is the golgi apparatus membrane. The catalysed reaction is a ganglioside GM2 (d18:1(4E)) + UDP-alpha-D-galactose = a ganglioside GM1 (d18:1(4E)) + UDP + H(+). It carries out the reaction a ganglioside GM2 + UDP-alpha-D-galactose = a ganglioside GM1 + UDP + H(+). The enzyme catalyses a ganglioside GD2 (d18:1(4E)) + UDP-alpha-D-galactose = a ganglioside GD1b (d18:1(4E)) + UDP + H(+). It catalyses the reaction a ganglioside GA2 (d18:1(4E)) + UDP-alpha-D-galactose = a ganglioside GA1 (d18:1(4E)) + UDP + H(+). It functions in the pathway protein modification; protein glycosylation. In terms of biological role, involved in GM1/GD1B/GA1 ganglioside biosynthesis. The protein is Beta-1,3-galactosyltransferase 4 of Homo sapiens (Human).